Here is a 28-residue protein sequence, read N- to C-terminus: Conotoxin Vi14b (28 aa).

Cystine bridges form between Cys-4-Cys-21 and Cys-7-Cys-18. Lys-15 and Lys-25 each carry N6-acetyllysine.

Post-translationally, the two N6-acetyllysines at position 15 and 25 have been deduced from the mass difference of 42. They are not common in venom proteins. Expressed by the venom gland.

The protein resides in the secreted. Its function is as follows. In vitro, inhibits proliferation of the mice ovarian cancer cells ID8. In Conus virgo (Virgin cone), this protein is Conotoxin Vi14b.